Consider the following 225-residue polypeptide: Probable GTP-binding protein EngB (225 aa).

An EngB-type G domain is found at 40–224 (GPPEVAFAGR…RAAIVHAVTA (185 aa)). GTP-binding positions include 48–55 (GRSNVGKS), 75–79 (GRTQE), 102–105 (DMPG), 169–172 (TKAD), and 203–205 (TSS). Mg(2+) is bound by residues S55 and T77.

It belongs to the TRAFAC class TrmE-Era-EngA-EngB-Septin-like GTPase superfamily. EngB GTPase family. Requires Mg(2+) as cofactor.

Necessary for normal cell division and for the maintenance of normal septation. The chain is Probable GTP-binding protein EngB from Chelativorans sp. (strain BNC1).